A 227-amino-acid polypeptide reads, in one-letter code: MAHAAQVGLQDATSPIMEELITFHDHALMIIFLICFLVLYALFLTLTTKLTSTNISDAQEMETIWTILPAIILVLIALPSLRILYMTDEINDPSFTIKSIGHQWYWTYEYTDYGGLIFNSYMLPPLFLEPGDLRLLDVDNRVVLPVEAPVRMMITSQDVLHSWAVPTLGLKTDAIPGRLNQTTFTATRPGVYYGQCSEICGANHSFMPIVLELIPLKIFEMGPVFAL.

Residues 1-14 lie on the Mitochondrial intermembrane side of the membrane; that stretch reads MAHAAQVGLQDATS. The chain crosses the membrane as a helical span at residues 15 to 45; the sequence is PIMEELITFHDHALMIIFLICFLVLYALFLT. The Mitochondrial matrix portion of the chain corresponds to 46 to 59; that stretch reads LTTKLTSTNISDAQ. The chain crosses the membrane as a helical span at residues 60 to 87; it reads EMETIWTILPAIILVLIALPSLRILYMT. The Mitochondrial intermembrane segment spans residues 88–227; the sequence is DEINDPSFTI…IFEMGPVFAL (140 aa). H161, C196, E198, C200, H204, and M207 together coordinate Cu cation. E198 is a Mg(2+) binding site.

It belongs to the cytochrome c oxidase subunit 2 family. In terms of assembly, component of the cytochrome c oxidase (complex IV, CIV), a multisubunit enzyme composed of 14 subunits. The complex is composed of a catalytic core of 3 subunits MT-CO1, MT-CO2 and MT-CO3, encoded in the mitochondrial DNA, and 11 supernumerary subunits COX4I, COX5A, COX5B, COX6A, COX6B, COX6C, COX7A, COX7B, COX7C, COX8 and NDUFA4, which are encoded in the nuclear genome. The complex exists as a monomer or a dimer and forms supercomplexes (SCs) in the inner mitochondrial membrane with NADH-ubiquinone oxidoreductase (complex I, CI) and ubiquinol-cytochrome c oxidoreductase (cytochrome b-c1 complex, complex III, CIII), resulting in different assemblies (supercomplex SCI(1)III(2)IV(1) and megacomplex MCI(2)III(2)IV(2)). Found in a complex with TMEM177, COA6, COX18, COX20, SCO1 and SCO2. Interacts with TMEM177 in a COX20-dependent manner. Interacts with COX20. Interacts with COX16. It depends on Cu cation as a cofactor.

It localises to the mitochondrion inner membrane. The enzyme catalyses 4 Fe(II)-[cytochrome c] + O2 + 8 H(+)(in) = 4 Fe(III)-[cytochrome c] + 2 H2O + 4 H(+)(out). Component of the cytochrome c oxidase, the last enzyme in the mitochondrial electron transport chain which drives oxidative phosphorylation. The respiratory chain contains 3 multisubunit complexes succinate dehydrogenase (complex II, CII), ubiquinol-cytochrome c oxidoreductase (cytochrome b-c1 complex, complex III, CIII) and cytochrome c oxidase (complex IV, CIV), that cooperate to transfer electrons derived from NADH and succinate to molecular oxygen, creating an electrochemical gradient over the inner membrane that drives transmembrane transport and the ATP synthase. Cytochrome c oxidase is the component of the respiratory chain that catalyzes the reduction of oxygen to water. Electrons originating from reduced cytochrome c in the intermembrane space (IMS) are transferred via the dinuclear copper A center (CU(A)) of subunit 2 and heme A of subunit 1 to the active site in subunit 1, a binuclear center (BNC) formed by heme A3 and copper B (CU(B)). The BNC reduces molecular oxygen to 2 water molecules using 4 electrons from cytochrome c in the IMS and 4 protons from the mitochondrial matrix. The chain is Cytochrome c oxidase subunit 2 (MT-CO2) from Gorilla gorilla gorilla (Western lowland gorilla).